Consider the following 194-residue polypeptide: Recombination protein RecR (194 aa).

The C4-type zinc finger occupies 52-67; that stretch reads CTECRTFTEEEVCHIC. Residues 76–171 form the Toprim domain; the sequence is GQICVVESPA…EASRIAHGVP (96 aa).

Belongs to the RecR family.

In terms of biological role, may play a role in DNA repair. It seems to be involved in an RecBC-independent recombinational process of DNA repair. It may act with RecF and RecO. This is Recombination protein RecR from Vibrio campbellii (strain ATCC BAA-1116).